The primary structure comprises 448 residues: Tumor necrosis factor receptor superfamily member EDAR (448 aa).

A signal peptide spans 1–26; sequence MAHVGDCKWMSWLPVLVVSLMCSAKA. Over 27–187 the chain is Extracellular; sequence EDSNCGENEY…LSGQGHLATA (161 aa). TNFR-Cys repeat units lie at residues 30-71, 73-113, and 115-150; these read NCGE…DYGC, PCPA…DAEC, and PCLPGYYMLENRPRNIYGMVCYSCLLAPPNTKECVG. Cystine bridges form between Cys-31-Cys-44, Cys-47-Cys-60, Cys-50-Cys-71, Cys-74-Cys-87, Cys-93-Cys-113, and Cys-135-Cys-148. A glycan (N-linked (GlcNAc...) asparagine) is linked at Asn-38. The helical transmembrane segment at 188 to 208 threads the bilayer; it reads LIIAMSTIFIMAIAIVLIIMF. Over 209–448 the chain is Cytoplasmic; the sequence is YIMKTKPSAP…PPASPPPAAS (240 aa). The span at 220–229 shows a compositional bias: low complexity; it reads CCSSPPGKSA. Residues 220–297 form a disordered region; sequence CCSSPPGKSA…EEPAPDKQGS (78 aa). The span at 258-283 shows a compositional bias: polar residues; the sequence is LTATPTKTPKSENDASSENEQLLSRS. Residues 358 to 431 form the Death domain; the sequence is RMLSSTYNSE…DAVESLCADI (74 aa).

Binds to EDARADD. Associates with TRAF1, TRAF2, TRAF3 and NIK.

The protein localises to the membrane. In terms of biological role, receptor for EDA isoform TAA, but not for EDA isoform TA-2. May mediate the activation of NF-kappa-B and JNK. May promote caspase-independent cell death. This chain is Tumor necrosis factor receptor superfamily member EDAR (Edar), found in Mus musculus (Mouse).